Consider the following 142-residue polypeptide: MAVQQNVKKGGREAGGDLIVGKHVYGNLYGVDEEKLWDEELLKDIVVEAARVANMNLVDIKTWKFTGFHGGVSVIALVLESHISIHTWPDYGYATVDVYTCGANSDPWKAFNYIVLKLKPRYYIVHYADRSSIPGYTESEKR.

Ser-81 acts as the Schiff-base intermediate with substrate; via pyruvic acid in catalysis. Ser-81 carries the pyruvic acid (Ser); by autocatalysis modification. The active-site Proton acceptor; for processing activity is the His-86. Cys-101 (proton donor; for catalytic activity) is an active-site residue.

This sequence belongs to the prokaryotic AdoMetDC family. Type 1 subfamily. As to quaternary structure, heterooctamer of four alpha and four beta chains arranged as a tetramer of alpha/beta heterodimers. Pyruvate is required as a cofactor. In terms of processing, is synthesized initially as an inactive proenzyme. Formation of the active enzyme involves a self-maturation process in which the active site pyruvoyl group is generated from an internal serine residue via an autocatalytic post-translational modification. Two non-identical subunits are generated from the proenzyme in this reaction, and the pyruvate is formed at the N-terminus of the alpha chain, which is derived from the carboxyl end of the proenzyme. The post-translation cleavage follows an unusual pathway, termed non-hydrolytic serinolysis, in which the side chain hydroxyl group of the serine supplies its oxygen atom to form the C-terminus of the beta chain, while the remainder of the serine residue undergoes an oxidative deamination to produce ammonia and the pyruvoyl group blocking the N-terminus of the alpha chain.

The catalysed reaction is L-arginine + H(+) = agmatine + CO2. It participates in amine and polyamine biosynthesis; agmatine biosynthesis; agmatine from L-arginine: step 1/1. Its function is as follows. Specifically catalyzes the decarboxylation of L-arginine to agmatine. Has no S-adenosylmethionine decarboxylase (AdoMetDC) activity. The chain is Arginine decarboxylase proenzyme from Hyperthermus butylicus (strain DSM 5456 / JCM 9403 / PLM1-5).